A 450-amino-acid polypeptide reads, in one-letter code: MSSLDVEEVIETIEMIRMRNLDVRAVTLGINLLDRAHPDPEELARDVREKIVEVAGDLVEVVEEVEDELGVPIVNKRIAVTPCSIVAASAVRKEGREAVLTLAEALDEAAEEVGVDYLGGYTALVYDGFTEADEAVLDTIPEAIEGTERLCASVVVADERYGINMDAVYRTAEAVKETAERTDGHGCARLVALTNAPENTPFMAGAFHGVGQPEACVNVGISGPGVVRAVVEELKDVDFRTLHDEIKRTAFKITRVGELVGRRVAERLGVEFGAVDLSLAPTPEEGDSVAEILEGIGLESCGCPGSTAALHLLMDAVKKGGAAATSRHGGYSEAFIPVSEDAGMARAAEEALTLEKLEAMTAVCSVGIDMVVVPGDTPVETIAGIIADEAAIGVVTGKPTAVRIIPAPGKEPGDEFEMGGLLGRAPVMDVSDYRPTMFRRDGRIPPKFPR.

It belongs to the UPF0210 family.

The protein is UPF0210 protein MK1214 of Methanopyrus kandleri (strain AV19 / DSM 6324 / JCM 9639 / NBRC 100938).